A 417-amino-acid polypeptide reads, in one-letter code: Methyltransferase/ribosomally synthesized cyclic peptide omphalotin A precursor ophMA (417 aa).

A methyltransferase domain region spans residues methionine 1–lysine 251. Active-site residues include arginine 72, tyrosine 76, and tyrosine 98. The S-adenosyl-L-methionine site is built by tyrosine 98, histidine 100, valine 103, alanine 130, glutamine 172, alanine 213, serine 244, and threonine 245. Residues alanine 252–methionine 378 form a clasp domain region. The tract at residues proline 379 to proline 399 is precursor leader. An N-methylvaline mark is found at valine 401, valine 403, and valine 404. Glycine 405 is subject to N-methylglycine. The residue at position 406 (valine 406) is an N-methylvaline. The residue at position 407 (isoleucine 407) is an N-methylisoleucine. Glycine 408 is subject to N-methylglycine. N-methylisoleucine is present on isoleucine 410. Glycine 411 is modified (N-methylglycine). The residue at position 413 (valine 413) is an N-methylvaline.

In the N-terminal section; belongs to the precorrin methyltransferase family. Homodimer. Post-translationally, ophMA automethylates at Val-401, Val-403, Val-404, Gly-405, Val-406, Ile-407, Gly-408, Ile-410, Gly-411 and Val-413 before being processed by the prolyloligopeptidase ophP which likely forms a peptidyl ester upon removal of the follower propeptide, which then undergoes macrocyclization with the N-terminus of the modified core peptide. Peptide backbone alpha-N-methylations change the physicochemical properties of amide bonds to provide structural constraints and other favorable characteristics including biological membrane permeability to peptides.

The protein operates within mycotoxin biosynthesis. In terms of biological role, fusion protein of the methyltransferase ophM and the omphalotin core peptide; part of the gene cluster that mediates the biosynthesis of omphalotin A, a highly methylated cyclic dodecapeptide with nematodicidal activity. Omphalotin A derives from the C-terminus of the ophMA protein, and it is the ophMA protein that methylates its own C-terminus using S-adenosyl methionine (SAM). The C-terminus is subsequently cleaved off and macrocyclized by the prolyloligopeptidase ophP to give the final product. The sequence is that of Methyltransferase/ribosomally synthesized cyclic peptide omphalotin A precursor ophMA from Omphalotus olearius (Jack o'lantern).